Reading from the N-terminus, the 1024-residue chain is Error-prone DNA polymerase (1024 aa).

This sequence belongs to the DNA polymerase type-C family. DnaE2 subfamily.

The protein localises to the cytoplasm. It carries out the reaction DNA(n) + a 2'-deoxyribonucleoside 5'-triphosphate = DNA(n+1) + diphosphate. Functionally, DNA polymerase involved in damage-induced mutagenesis and translesion synthesis (TLS). It is not the major replicative DNA polymerase. This Vibrio vulnificus (strain CMCP6) protein is Error-prone DNA polymerase.